The sequence spans 177 residues: MIRIIAIVVLFFLQCQADLPPVMKGLEENKVTGVWYGIAAASNCKQFLQMKSDNMPAPVNIYSLNNGHMKSSTSFQTEKGCQQMDVEMTTVEKGHYKWKMQQGDSETIIVATDYDAFLMEFTKIQMGAEVCVTVKLFGRKDTLPEDKIKHFEDHIEKVGLKKEQYIRFHTKATCVPK.

An N-terminal signal peptide occupies residues 1–17 (MIRIIAIVVLFFLQCQA). An intrachain disulfide couples Cys81 to Cys174.

This sequence belongs to the calycin superfamily. Lipocalin family. Synthesized in Bowman glands, which secrete the mucus that bathes the cilia of the olfactory neuroepithelium.

It is found in the secreted. The chain is Olfactory protein from Lithobates pipiens (Northern leopard frog).